A 563-amino-acid chain; its full sequence is Endoglucanase B (563 aa).

Residues 1 to 27 (MKKFLVLLIALIMIATLLVVPGVQTSA) constitute a signal peptide (or 31). The active-site Proton donor is the E204. E363 acts as the Nucleophile in catalysis. The interval 476 to 495 (SVTPSPSATPSPTTITAPPT) is disordered. One can recognise a Dockerin domain in the interval 496–562 (DTVTYGDVNG…VLRSISELPY (67 aa)).

This sequence belongs to the glycosyl hydrolase 5 (cellulase A) family.

It catalyses the reaction Endohydrolysis of (1-&gt;4)-beta-D-glucosidic linkages in cellulose, lichenin and cereal beta-D-glucans.. This enzyme catalyzes the endohydrolysis of 1,4-beta-glucosidic linkages in cellulose, lichenin and cereal beta-D-glucans. In Acetivibrio thermocellus (strain ATCC 27405 / DSM 1237 / JCM 9322 / NBRC 103400 / NCIMB 10682 / NRRL B-4536 / VPI 7372) (Clostridium thermocellum), this protein is Endoglucanase B (celB).